Reading from the N-terminus, the 1194-residue chain is ATP-dependent RNA helicase DHX30 (1194 aa).

A compositionally biased stretch (basic and acidic residues) spans 1–10; the sequence is MFSLDSFRKD. The interval 1 to 27 is disordered; the sequence is MFSLDSFRKDRAQHRQRQCKLPPPRLP. Phosphoserine is present on residues Ser-6 and Arg-15. The DRBM domain occupies 53 to 121; that stretch reads PKNLLNSVIG…QAAAAACQLF (69 aa). The tract at residues 150–199 is disordered; that stretch reads ADSWWRPEPTMPPTSWRQLNPESIRPGGPGGLSRSLGREEEEDEEEELEE. Over residues 188-199 the composition is skewed to acidic residues; it reads EEEEDEEEELEE. Ser-226 and Ser-380 each carry phosphoserine. One can recognise a Helicase ATP-binding domain in the interval 444–612; sequence LNAIEQHPVV…FGGCPVIKVP (169 aa). 457–464 lines the ATP pocket; that stretch reads GDTGCGKT. The short motif at 559–562 is the DEAH box element; it reads DEVH. The Helicase C-terminal domain occupies 654 to 827; it reads LVTDLVLHID…NLVLQAKIHM (174 aa).

The protein belongs to the DEAD box helicase family. DEAH subfamily. In terms of assembly, identified in a complex with TFAM and SSBP1. Interacts with AGO1 and AGO2. Interacts (via N-terminus) with ZC3HAV1 (via N-terminal domain) in an RNA-independent manner. Found in a complex with GRSF1, DDX28, FASTKD2 and FASTKD5. Phosphorylated on Ser-15.

Its subcellular location is the cytoplasm. The protein resides in the mitochondrion. The protein localises to the mitochondrion matrix. It localises to the mitochondrion nucleoid. The catalysed reaction is ATP + H2O = ADP + phosphate + H(+). In terms of biological role, RNA-dependent helicase. Plays an important role in the assembly of the mitochondrial large ribosomal subunit. Required for optimal function of the zinc-finger antiviral protein ZC3HAV1. Associates with mitochondrial DNA. Involved in nervous system development and differentiation through its involvement in the up-regulation of a number of genes which are required for neurogenesis, including GSC, NCAM1, neurogenin, and NEUROD. The sequence is that of ATP-dependent RNA helicase DHX30 (DHX30) from Homo sapiens (Human).